Reading from the N-terminus, the 330-residue chain is Atypical chemokine receptor 1 (330 aa).

The Extracellular portion of the chain corresponds to 1 to 57 (MGNCLYPVADDNSTKLAIKEDFLIDFPEDYYPDYNETDVEAAAPCHSCSLLNYSSLP). N-linked (GlcNAc...) asparagine glycans are attached at residues N12, N35, and N52. Cystine bridges form between C45/C270 and C123/C189. Residues 58–78 (FFILVSILGILASGTILYALL) form a helical membrane-spanning segment. Residues 79–89 (RPLFRWQLYQD) lie on the Cytoplasmic side of the membrane. Residues 90 to 110 (RSTLVQLAVGSALFSIVVPIL) traverse the membrane as a helical segment. Over 111–123 (ARGLSGALITSLC) the chain is Extracellular. A helical membrane pass occupies residues 124-147 (HLAHLVAYGSAFAQALLIGYHACL). Residues 148-160 (GPQLGAGQVPGLR) are Cytoplasmic-facing. The chain crosses the membrane as a helical span at residues 161–181 (LGVTVGLWGVAALLSLPVVLG). The Extracellular portion of the chain corresponds to 182–201 (SDTSQGLCTVTFSGEWETLR). Residues 202–222 (YIHAAACFAIFVLLPLGLLGT) traverse the membrane as a helical segment. Residues 223 to 238 (KGLKTVLGRAPCPWVD) are Cytoplasmic-facing. The chain crosses the membrane as a helical span at residues 239 to 259 (VLWVWFIFWWPQGMTLGLDSL). Residues 260 to 281 (VRSKAIVVSTCPAQQALDMLLD) lie on the Extracellular side of the membrane. The helical transmembrane segment at 282-302 (VAEALAILHCVATPLLLAWVC) threads the bilayer. Topologically, residues 303–330 (YQATHTSPPSLPLPTTQTSHLDTLGGKS) are cytoplasmic.

It belongs to the G-protein coupled receptor 1 family. Atypical chemokine receptor subfamily.

The protein localises to the early endosome. It is found in the recycling endosome. Its subcellular location is the membrane. Its function is as follows. Atypical chemokine receptor that controls chemokine levels and localization via high-affinity chemokine binding that is uncoupled from classic ligand-driven signal transduction cascades, resulting instead in chemokine sequestration, degradation, or transcytosis. Also known as interceptor (internalizing receptor) or chemokine-scavenging receptor or chemokine decoy receptor. Has a promiscuous chemokine-binding profile, interacting with inflammatory chemokines of both the CXC and the CC subfamilies but not with homeostatic chemokines. Acts as a receptor for chemokines including CCL2, CCL5, CCL7, CCL11, CCL13, CCL14, CCL17, CXCL5, CXCL6, IL8/CXCL8, CXCL11, GRO, RANTES, MCP-1 and TARC. May regulate chemokine bioavailability and, consequently, leukocyte recruitment through two distinct mechanisms: when expressed in endothelial cells, it sustains the abluminal to luminal transcytosis of tissue-derived chemokines and their subsequent presentation to circulating leukocytes; when expressed in erythrocytes, serves as blood reservoir of cognate chemokines but also as a chemokine sink, buffering potential surges in plasma chemokine levels. The protein is Atypical chemokine receptor 1 (ACKR1) of Bos taurus (Bovine).